Here is a 506-residue protein sequence, read N- to C-terminus: DEAD-box ATP-dependent RNA helicase CshA (506 aa).

Positions 2–30 match the Q motif motif; it reads QNFKELGISDNTVQSLESMGFKEPTPIQK. A Helicase ATP-binding domain is found at 33–203; it reads IPYALQGIDI…QQFMKSPKII (171 aa). 46-53 provides a ligand contact to ATP; sequence AQTGTGKT. A DEAD box motif is present at residues 150-153; sequence DEAD. In terms of domain architecture, Helicase C-terminal spans 214-375; sequence QIEEFYTIVK…LRPPHRKEVL (162 aa). The interval 436–506 is disordered; sequence EKPLSRKGRN…KGRTFADHQK (71 aa). Residues 468 to 480 are compositionally biased toward basic residues; sequence KRSKGYSSKKKST.

It belongs to the DEAD box helicase family. CshA subfamily. Oligomerizes, may be a member of the RNA degradosome.

The protein localises to the cytoplasm. The enzyme catalyses ATP + H2O = ADP + phosphate + H(+). In terms of biological role, DEAD-box RNA helicase possibly involved in RNA degradation. Unwinds dsRNA in both 5'- and 3'-directions, has RNA-dependent ATPase activity. The sequence is that of DEAD-box ATP-dependent RNA helicase CshA from Staphylococcus aureus (strain bovine RF122 / ET3-1).